Reading from the N-terminus, the 346-residue chain is Serpentine receptor class beta-11 (346 aa).

7 helical membrane passes run 26–46 (YQMI…LFKL), 57–77 (TIFI…LTTS), 102–122 (IWNF…CSVT), 139–159 (SVVM…CIIF), 186–206 (FTFF…DLIL), 239–259 (VFLI…VVFF), and 278–298 (TFST…SSFF).

It belongs to the nematode receptor-like protein srb family.

The protein resides in the membrane. This Caenorhabditis elegans protein is Serpentine receptor class beta-11 (srb-11).